The primary structure comprises 198 residues: Dephospho-CoA kinase (198 aa).

A DPCK domain is found at 3-198 (VVGLTGGIGA…HRRYSLLAAA (196 aa)). 11-16 (GAGKST) contributes to the ATP binding site.

It belongs to the CoaE family.

The protein resides in the cytoplasm. It catalyses the reaction 3'-dephospho-CoA + ATP = ADP + CoA + H(+). Its pathway is cofactor biosynthesis; coenzyme A biosynthesis; CoA from (R)-pantothenate: step 5/5. Functionally, catalyzes the phosphorylation of the 3'-hydroxyl group of dephosphocoenzyme A to form coenzyme A. The chain is Dephospho-CoA kinase from Methylococcus capsulatus (strain ATCC 33009 / NCIMB 11132 / Bath).